The primary structure comprises 261 residues: MRLCFILFLLLSPLISEASQHIITVKTIHEIASDILYDDANYWLIFDIDDVLFEGAEALSHSAWFERSIQGMRALGTSEQEAWDTLYPDWLSIQRQGSIKQIETAIPLLITKVQNQNKIVFAYSERKVCAQDVTLEQLAKINLSFEKANLPYTSLPSNICFTKGVLFGSEIHKGPGLQRFLDAQPSLPEKVIYIDNEKYNVLRIGEVCKQKNIPYLGIVYTASKYHPPIYLPDIARIQYLYRQKLISNEAAALLSRHRLDK.

An N-terminal signal peptide occupies residues 1–18 (MRLCFILFLLLSPLISEA).

Its subcellular location is the cell outer membrane. The chain is Putative outer membrane protein CT_371 from Chlamydia trachomatis serovar D (strain ATCC VR-885 / DSM 19411 / UW-3/Cx).